Reading from the N-terminus, the 375-residue chain is tRNA-specific 2-thiouridylase MnmA (375 aa).

ATP contacts are provided by residues 12 to 19 (GMSGGVDS) and M38. The interaction with target base in tRNA stretch occupies residues 98 to 100 (NPD). C103 serves as the catalytic Nucleophile. C103 and C200 form a disulfide bridge. Residue G127 participates in ATP binding. The tract at residues 150–152 (KDQ) is interaction with tRNA. Catalysis depends on C200, which acts as the Cysteine persulfide intermediate. Residues 312–313 (RY) form an interaction with tRNA region.

The protein belongs to the MnmA/TRMU family.

Its subcellular location is the cytoplasm. The catalysed reaction is S-sulfanyl-L-cysteinyl-[protein] + uridine(34) in tRNA + AH2 + ATP = 2-thiouridine(34) in tRNA + L-cysteinyl-[protein] + A + AMP + diphosphate + H(+). Functionally, catalyzes the 2-thiolation of uridine at the wobble position (U34) of tRNA, leading to the formation of s(2)U34. The polypeptide is tRNA-specific 2-thiouridylase MnmA (Lactobacillus johnsonii (strain CNCM I-12250 / La1 / NCC 533)).